Reading from the N-terminus, the 305-residue chain is Ribosomal RNA small subunit methyltransferase H (305 aa).

Residues 33–35, Asp-51, Phe-78, Asp-96, and Gln-103 each bind S-adenosyl-L-methionine; that span reads GGY.

Belongs to the methyltransferase superfamily. RsmH family.

It is found in the cytoplasm. It catalyses the reaction cytidine(1402) in 16S rRNA + S-adenosyl-L-methionine = N(4)-methylcytidine(1402) in 16S rRNA + S-adenosyl-L-homocysteine + H(+). Specifically methylates the N4 position of cytidine in position 1402 (C1402) of 16S rRNA. This chain is Ribosomal RNA small subunit methyltransferase H, found in Rickettsia bellii (strain RML369-C).